Reading from the N-terminus, the 258-residue chain is Gene 3 protein (258 aa).

Residues 163–176 show a composition bias toward polar residues; sequence STENLLGQTQSSTH. A disordered region spans residues 163-258; sequence STENLLGQTQ…TRRYPPSFFK (96 aa). Positions 214-240 are enriched in basic and acidic residues; sequence SIREETVSGMARAREECNSPSEHDRLT.

This chain is Gene 3 protein, found in Equine herpesvirus 1 (strain Kentucky A) (EHV-1).